A 154-amino-acid polypeptide reads, in one-letter code: MQAVQVKVLNPKITEDKAFSLPTRATDGSAGIDLRACIDEPLTIKAGTTHLIGTGLAIYIQDPNFAGMILPRSGLGHKHGIVLGNLVGLIDADYQGELMVSIWNRSLEDFVLNPAERMAQYVVVPVARPEFEVVTEFSDTSARGAGGFGHSGRQ.

Residues 72-74 (RSG), Asn85, 89-91 (LID), and Met99 each bind substrate.

It belongs to the dUTPase family. Requires Mg(2+) as cofactor.

The catalysed reaction is dUTP + H2O = dUMP + diphosphate + H(+). The protein operates within pyrimidine metabolism; dUMP biosynthesis; dUMP from dCTP (dUTP route): step 2/2. In terms of biological role, this enzyme is involved in nucleotide metabolism: it produces dUMP, the immediate precursor of thymidine nucleotides and it decreases the intracellular concentration of dUTP so that uracil cannot be incorporated into DNA. The sequence is that of Deoxyuridine 5'-triphosphate nucleotidohydrolase from Psychrobacter arcticus (strain DSM 17307 / VKM B-2377 / 273-4).